Reading from the N-terminus, the 217-residue chain is Pyridoxine/pyridoxamine 5'-phosphate oxidase (217 aa).

Residues 13–16 (RREY) and Lys71 contribute to the substrate site. Residues 66-71 (RIVLLK), 81-82 (YT), Arg87, Lys88, and Gln110 contribute to the FMN site. Positions 128, 132, and 136 each coordinate substrate. Residues 145–146 (QS) and Trp190 contribute to the FMN site. 196–198 (RLH) contacts substrate. FMN is bound at residue Arg200.

The protein belongs to the pyridoxamine 5'-phosphate oxidase family. Homodimer. It depends on FMN as a cofactor.

The catalysed reaction is pyridoxamine 5'-phosphate + O2 + H2O = pyridoxal 5'-phosphate + H2O2 + NH4(+). It catalyses the reaction pyridoxine 5'-phosphate + O2 = pyridoxal 5'-phosphate + H2O2. The protein operates within cofactor metabolism; pyridoxal 5'-phosphate salvage; pyridoxal 5'-phosphate from pyridoxamine 5'-phosphate: step 1/1. It participates in cofactor metabolism; pyridoxal 5'-phosphate salvage; pyridoxal 5'-phosphate from pyridoxine 5'-phosphate: step 1/1. Catalyzes the oxidation of either pyridoxine 5'-phosphate (PNP) or pyridoxamine 5'-phosphate (PMP) into pyridoxal 5'-phosphate (PLP). The chain is Pyridoxine/pyridoxamine 5'-phosphate oxidase from Photorhabdus laumondii subsp. laumondii (strain DSM 15139 / CIP 105565 / TT01) (Photorhabdus luminescens subsp. laumondii).